A 445-amino-acid chain; its full sequence is MSTTPAPANPKVGFVSLGCPKALVDSERILTQLRMEGYDVVSTYQDADVVVVNTCGFIDSAKAESLEVIGEAIKENGKVIVTGCMGVEEGNIRDVHPSVLAVTGPQQYEQVVNAVHEVVPPKQDHNPLIDLVPPQGIKLTPRHYAYLKISEGCNHSCSFCIIPSMRGKLVSRPVGDVLDEAQRLVKSGVKELLVISQDTSAYGVDVKYRTGFWNGAPVKTRMTELCEALSTLGVWVRLHYVYPYPHVDELIPLMAAGKILPYLDIPFQHASPKVLKSMKRPAFEDKTLARIKNWREICPDLIIRSTFIVGFPGETEEDFQYLLDWLTEAQLDRVGCFQYSPVEGAPANDLDLEVVPDDVKQDRWERFMAHQQAISSARLQLRIGREIEVLVDEVDEQGAVGRCFFDAPEIDGNVFIDNGSNLKPGDKVWCKVTDADEYDLWAEQI.

Positions 10–120 (PKVGFVSLGC…VVNAVHEVVP (111 aa)) constitute an MTTase N-terminal domain. The [4Fe-4S] cluster site is built by cysteine 19, cysteine 55, cysteine 84, cysteine 153, cysteine 157, and cysteine 160. Positions 139-378 (LTPRHYAYLK…AHQQAISSAR (240 aa)) constitute a Radical SAM core domain. The 66-residue stretch at 380–445 (QLRIGREIEV…DEYDLWAEQI (66 aa)) folds into the TRAM domain.

It belongs to the methylthiotransferase family. RimO subfamily. The cofactor is [4Fe-4S] cluster.

It localises to the cytoplasm. It catalyses the reaction L-aspartate(89)-[ribosomal protein uS12]-hydrogen + (sulfur carrier)-SH + AH2 + 2 S-adenosyl-L-methionine = 3-methylsulfanyl-L-aspartate(89)-[ribosomal protein uS12]-hydrogen + (sulfur carrier)-H + 5'-deoxyadenosine + L-methionine + A + S-adenosyl-L-homocysteine + 2 H(+). Its function is as follows. Catalyzes the methylthiolation of an aspartic acid residue of ribosomal protein uS12. This Pseudomonas fluorescens (strain Pf0-1) protein is Ribosomal protein uS12 methylthiotransferase RimO.